The primary structure comprises 420 residues: UDP-N-acetyl-D-mannosamine dehydrogenase (420 aa).

Residues Tyr-13, Ile-14, Asp-33, Thr-85, and Thr-126 each contribute to the NAD(+) site. Arg-160, Val-161, Lys-212, Asn-216, Arg-219, His-250, Arg-252, and Gly-263 together coordinate UDP-N-acetyl-alpha-D-mannosaminouronate. Residue Lys-212 is the Proton donor/acceptor of the active site. Residue Cys-266 is the Nucleophile of the active site. Positions 330 and 331 each coordinate UDP-N-acetyl-alpha-D-mannosaminouronate. An NAD(+)-binding site is contributed by Arg-338. Residue Lys-416 participates in UDP-N-acetyl-alpha-D-mannosaminouronate binding.

Belongs to the UDP-glucose/GDP-mannose dehydrogenase family. WecC subfamily. In terms of assembly, homodimer.

It catalyses the reaction UDP-N-acetyl-alpha-D-mannosamine + 2 NAD(+) + H2O = UDP-N-acetyl-alpha-D-mannosaminouronate + 2 NADH + 3 H(+). It functions in the pathway bacterial outer membrane biogenesis; enterobacterial common antigen biosynthesis. Catalyzes the four-electron oxidation of UDP-N-acetyl-D-mannosamine (UDP-ManNAc), reducing NAD(+) and releasing UDP-N-acetylmannosaminuronic acid (UDP-ManNAcA). This Salmonella typhi protein is UDP-N-acetyl-D-mannosamine dehydrogenase.